The following is a 184-amino-acid chain: Inosine triphosphate pyrophosphatase (184 aa).

9-14 (TSNASK) serves as a coordination point for ITP. A Mg(2+)-binding site is contributed by E38. Residues K50, 66-67 (DT), K83, 142-145 (FGWD), K163, and 168-169 (HR) contribute to the ITP site.

This sequence belongs to the HAM1 NTPase family. As to quaternary structure, homodimer. It depends on Mg(2+) as a cofactor. Requires Mn(2+) as cofactor.

The protein resides in the cytoplasm. It is found in the nucleus. The enzyme catalyses ITP + H2O = IMP + diphosphate + H(+). It catalyses the reaction dITP + H2O = dIMP + diphosphate + H(+). The catalysed reaction is XTP + H2O = XMP + diphosphate + H(+). Functionally, pyrophosphatase that hydrolyzes non-canonical purine nucleotides such as inosine triphosphate (ITP), deoxyinosine triphosphate (dITP) or xanthosine 5'-triphosphate (XTP) to their respective monophosphate derivatives. The enzyme does not distinguish between the deoxy- and ribose forms. Probably excludes non-canonical purines from RNA and DNA precursor pools, thus preventing their incorporation into RNA and DNA and avoiding chromosomal lesions. The sequence is that of Inosine triphosphate pyrophosphatase from Tuber melanosporum (strain Mel28) (Perigord black truffle).